The chain runs to 429 residues: Histidine--tRNA ligase (429 aa).

The protein belongs to the class-II aminoacyl-tRNA synthetase family. As to quaternary structure, homodimer.

The protein resides in the cytoplasm. The catalysed reaction is tRNA(His) + L-histidine + ATP = L-histidyl-tRNA(His) + AMP + diphosphate + H(+). This Streptococcus pneumoniae (strain JJA) protein is Histidine--tRNA ligase.